The sequence spans 334 residues: Trans-3-hydroxy-L-proline dehydratase (334 aa).

The active-site Proton acceptor is the Cys-91. Substrate contacts are provided by residues 92-93 (GH), Asp-250, and 255-256 (GT).

Belongs to the proline racemase family.

It carries out the reaction trans-3-hydroxy-L-proline = 1-pyrroline-2-carboxylate + H2O. In terms of biological role, catalyzes the dehydration of trans-3-hydroxy-L-proline (t3LHyp) to Delta(1)-pyrroline-2-carboxylate (Pyr2C). Is likely involved in a degradation pathway that converts t3LHyp to L-proline, which allows B.cereus to grow on t3LHyp as a sole carbon source. Displays no proline racemase activity. This chain is Trans-3-hydroxy-L-proline dehydratase, found in Bacillus cereus (strain ATCC 14579 / DSM 31 / CCUG 7414 / JCM 2152 / NBRC 15305 / NCIMB 9373 / NCTC 2599 / NRRL B-3711).